The sequence spans 433 residues: Protein arginine N-methyltransferase 2 (433 aa).

The tract at residues 1-20 is disordered; that stretch reads MATSGDCPRSESQGEEPAEC. Interaction with ESR1 stretches follow at residues 1–277 and 133–275; these read MATS…SALK and KESL…NLSA. Residues 30 to 89 enclose the SH3 domain; the sequence is VQPEEFVAIADYAATDETQLSFLRGEKILILRQTTADWWWGERAGCCGYIPANHVGKHVD. 2 positions are modified to asymmetric dimethylarginine: R61 and R72. The interval 83–207 is interaction with RB1; that stretch reads HVGKHVDEYD…DVVLPEKVDV (125 aa). The SAM-dependent MTase PRMT-type domain occupies 99-432; it reads DEEYFGSYGT…KVGEKVFPIW (334 aa). S-adenosyl-L-methionine-binding residues include H112, R121, G145, E168, and E197. Catalysis depends on residues E211 and E220.

This sequence belongs to the class I-like SAM-binding methyltransferase superfamily. Protein arginine N-methyltransferase family. In terms of assembly, self-associates. Interacts with RB1 and E2F1. Interacts with NCOA6 coactivator. Interacts (via SH3 domain) with PRMT8. Interacts with AR. Interacts with NFKBIA. Interacts with ESR1, ESR2, PGR, PPARG, RARA, RXRA and THRB. Interacts with HNRNPUL1. Widely expressed. Highly expressed in androgen target organs such as heart, prostate, skeletal muscle, ovary and spinal cord.

It is found in the cytoplasm. It localises to the nucleus. The protein localises to the nucleolus. It catalyses the reaction L-arginyl-[protein] + 2 S-adenosyl-L-methionine = N(omega),N(omega)-dimethyl-L-arginyl-[protein] + 2 S-adenosyl-L-homocysteine + 2 H(+). In terms of biological role, arginine methyltransferase that methylates the guanidino nitrogens of arginyl residues in proteins such as STAT3, FBL, histone H4. Acts as a coactivator (with NCOA2) of the androgen receptor (AR)-mediated transactivation. Acts as a coactivator (with estrogen) of estrogen receptor (ER)-mediated transactivation. Enhances PGR, PPARG, RARA-mediated transactivation. May inhibit NF-kappa-B transcription and promote apoptosis. Represses E2F1 transcriptional activity (in a RB1-dependent manner). May be involved in growth regulation. The chain is Protein arginine N-methyltransferase 2 (PRMT2) from Homo sapiens (Human).